A 194-amino-acid chain; its full sequence is Leucyl/phenylalanyl-tRNA--protein transferase (194 aa).

Belongs to the L/F-transferase family.

It localises to the cytoplasm. The catalysed reaction is N-terminal L-lysyl-[protein] + L-leucyl-tRNA(Leu) = N-terminal L-leucyl-L-lysyl-[protein] + tRNA(Leu) + H(+). The enzyme catalyses N-terminal L-arginyl-[protein] + L-leucyl-tRNA(Leu) = N-terminal L-leucyl-L-arginyl-[protein] + tRNA(Leu) + H(+). It carries out the reaction L-phenylalanyl-tRNA(Phe) + an N-terminal L-alpha-aminoacyl-[protein] = an N-terminal L-phenylalanyl-L-alpha-aminoacyl-[protein] + tRNA(Phe). In terms of biological role, functions in the N-end rule pathway of protein degradation where it conjugates Leu, Phe and, less efficiently, Met from aminoacyl-tRNAs to the N-termini of proteins containing an N-terminal arginine or lysine. This is Leucyl/phenylalanyl-tRNA--protein transferase from Prosthecochloris aestuarii (strain DSM 271 / SK 413).